Consider the following 201-residue polypeptide: Glycerol-3-phosphate acyltransferase (201 aa).

The next 6 helical transmembrane spans lie at 10–30 (MLIG…GLIL), 60–80 (LAAA…LIAA), 86–106 (AAIA…WIGF), 116–136 (LGVL…AWIV), 139–159 (LLTR…PIAL), and 166–186 (ALAA…RANI).

It belongs to the PlsY family. Probably interacts with PlsX.

The protein localises to the cell inner membrane. The catalysed reaction is an acyl phosphate + sn-glycerol 3-phosphate = a 1-acyl-sn-glycero-3-phosphate + phosphate. Its pathway is lipid metabolism; phospholipid metabolism. Functionally, catalyzes the transfer of an acyl group from acyl-phosphate (acyl-PO(4)) to glycerol-3-phosphate (G3P) to form lysophosphatidic acid (LPA). This enzyme utilizes acyl-phosphate as fatty acyl donor, but not acyl-CoA or acyl-ACP. The polypeptide is Glycerol-3-phosphate acyltransferase (Brucella suis (strain ATCC 23445 / NCTC 10510)).